Consider the following 313-residue polypeptide: Uracil-DNA glycosylase (313 aa).

The segment covering 1 to 12 has biased composition (polar residues); sequence MIGQKTLYSFFS. Residues 1 to 25 are interaction with FAM72A; that stretch reads MIGQKTLYSFFSPSPARKRHAPSPE. The tract at residues 1-29 is mitochondrial localization signal; the sequence is MIGQKTLYSFFSPSPARKRHAPSPEPAVQ. The disordered stretch occupies residues 1 to 68; that stretch reads MIGQKTLYSF…GTPPSSPLSA (68 aa). Residues Ser12 and Ser14 each carry the phosphoserine modification. Positions 17 to 19 match the Important for nuclear sorting motif; the sequence is RKR. Phosphoserine is present on Ser23. Residues 43-53 show a composition bias toward low complexity; it reads AAAIPAKKAPA. Position 60 is a phosphothreonine (Thr60). Ser64 is modified (phosphoserine). Residues 73–88 form an interaction with RPA2 region; sequence RIQRNKAAALLRLAAR. A uracil-binding site is contributed by Gln153. The active-site Proton acceptor is the Asp154. His157 is a binding site for dsDNA. Phe167 is a uracil binding site. Ser178 is a dsDNA binding site. A uracil-binding site is contributed by Asn213. The dsDNA site is built by Ser256, His277, Ser279, Ser282, and Arg285. Position 277 (His277) interacts with uracil. Lys295 is subject to N6-acetyllysine.

This sequence belongs to the uracil-DNA glycosylase (UDG) superfamily. UNG family. As to quaternary structure, monomer. Interacts with RPA2 subunit of the RPA trimer; this interaction mediates UNG2 recruitment to RPA-coated single-stranded DNA at stalled replication forks. Interacts with PCNA; this interaction mediates UNG2 recruitment to S-phase replication foci. Interacts (via N-terminus) with FAM72A. In terms of assembly, (Microbial infection) Interacts with HIV-1 Vpr. Processed by mitochondrial serine or cysteine peptidases to yield a mature dominant form that lacks N-terminal 29 amino acid residues and another minor form that lacks N-terminal 77 amino acid residues. The catalytic activity of UNG1 delta29 is not product-inhibited by AP sites.

The protein localises to the mitochondrion. It localises to the nucleus. The enzyme catalyses Hydrolyzes single-stranded DNA or mismatched double-stranded DNA and polynucleotides, releasing free uracil.. It carries out the reaction a 2'-deoxyuridine in single-stranded DNA + H2O = a 2'-deoxyribose 5'-monophosphate in single-stranded DNA + uracil. The catalysed reaction is a 2'-deoxyuridine in double-stranded DNA + H2O = a 2'-deoxyribose 5'-monophosphate in double-stranded DNA + uracil. Its function is as follows. Uracil-DNA glycosylase that hydrolyzes the N-glycosidic bond between uracil and deoxyribose in single- and double-stranded DNA (ssDNA and dsDNA) to release a free uracil residue and form an abasic (apurinic/apyrimidinic; AP) site. Excises uracil residues arising as a result of misincorporation of dUMP residues by DNA polymerase during replication or due to spontaneous or enzymatic deamination of cytosine. Mediates error-free base excision repair (BER) of uracil at replication forks. According to the model, it is recruited by PCNA to S-phase replication forks to remove misincorporated uracil at U:A base mispairs in nascent DNA strands. Via trimeric RPA it is recruited to ssDNA stretches ahead of the polymerase to allow detection and excision of deaminated cytosines prior to replication. The resultant AP sites temporarily stall replication, allowing time to repair the lesion. Mediates mutagenic uracil processing involved in antibody affinity maturation. Processes AICDA-induced U:G base mispairs at variable immunoglobulin (Ig) regions leading to the generation of transversion mutations. Operates at switch sites of Ig constant regions where it mediates Ig isotype class switch recombination. Excises AICDA-induced uracil residues forming AP sites that are subsequently nicked by APEX1 endonuclease. The accumulation of staggered nicks in opposite strands results in double strand DNA breaks that are finally resolved via non-homologous end joining repair pathway. The protein is Uracil-DNA glycosylase of Homo sapiens (Human).